A 190-amino-acid chain; its full sequence is MGMNTGLVIAGVAGATALAISAAAIPFVAPALRRVCIPYVPATTEQLANVSRALSLATSSNSNKKGTLIDLGSGDGRVVLQCAREGFNSTGVELNSILVAYSKYRSIREGLGKETRFMRKNIFKTDLNPYQTAVIFGAESLMGDLVPKLSEMRSNTNLLACRFPLPENDAWKLEHQIGEGIDAVWVYKRN.

It belongs to the ANT/ATPSC lysine N-methyltransferase family.

It localises to the mitochondrion. It catalyses the reaction L-lysyl-[protein] + 3 S-adenosyl-L-methionine = N(6),N(6),N(6)-trimethyl-L-lysyl-[protein] + 3 S-adenosyl-L-homocysteine + 3 H(+). Mitochondrial protein-lysine N-methyltransferase that trimethylates ATP synthase subunit C. Trimethylation is required for proper incorporation of the C subunit into the ATP synthase complex and mitochondrial respiration. The chain is ATP synthase subunit C lysine N-methyltransferase from Caenorhabditis elegans.